Consider the following 84-residue polypeptide: Small ribosomal subunit protein uS17 (84 aa).

This sequence belongs to the universal ribosomal protein uS17 family. In terms of assembly, part of the 30S ribosomal subunit.

Its function is as follows. One of the primary rRNA binding proteins, it binds specifically to the 5'-end of 16S ribosomal RNA. The polypeptide is Small ribosomal subunit protein uS17 (Clostridium botulinum (strain Eklund 17B / Type B)).